Here is a 330-residue protein sequence, read N- to C-terminus: Cobalamin biosynthesis protein CobD (330 aa).

The next 4 membrane-spanning stretches (helical) occupy residues 60–80, 153–173, 227–247, and 308–328; these read TLVI…PPIV, GIIA…LLGV, LGIV…WKIF, and IVLF…FVLT.

It belongs to the CobD/CbiB family.

Its subcellular location is the cell membrane. The protein operates within cofactor biosynthesis; adenosylcobalamin biosynthesis. In terms of biological role, converts cobyric acid to cobinamide by the addition of aminopropanol on the F carboxylic group. This Desulfotalea psychrophila (strain LSv54 / DSM 12343) protein is Cobalamin biosynthesis protein CobD.